Consider the following 150-residue polypeptide: Large ribosomal subunit protein bL9 (150 aa).

It belongs to the bacterial ribosomal protein bL9 family.

Its function is as follows. Binds to the 23S rRNA. This chain is Large ribosomal subunit protein bL9, found in Hamiltonella defensa subsp. Acyrthosiphon pisum (strain 5AT).